A 388-amino-acid polypeptide reads, in one-letter code: bZIP transcription factor ABI5 homolog (388 aa).

The interval 1–36 is disordered; the sequence is MASEMSKNVKVTDDQEVTSQERDQSGGTKVGGEEEI. S44 carries the post-translational modification Phosphoserine. The bZIP domain occupies 302–365; it reads VERRQRRMIK…KQMLVEKMME (64 aa). Residues 304–323 form a basic motif region; the sequence is RRQRRMIKNRESAARSRARK. Residues 330 to 344 are leucine-zipper; that stretch reads LEAELNYLKQENARL. Residues 368-388 form a disordered region; it reads KEKMNANRGGSQLRRSGSCMW.

The protein belongs to the bZIP family. ABI5 subfamily. Forms homodimers. Interacts with VP1. Interacts with GF14D. Interacts with PP2C51. Interacts with SAPK2. Post-translationally, phosphorylated at Ser-44 by SAPK6. In terms of tissue distribution, expressed in roots, leaves and panicles. Expressed in seeds.

It is found in the nucleus. Functionally, transcription factor that possesses transactivation activity in yeast. Involved in abscisic acid (ABA) signaling pathway. Binds to the G-box motif 5'-CACGTG-3' of TRAB1 gene promoter. Involved in the regulation of pollen maturation. May act as negative regulator of salt stress response. Together with PYL5, PP2C30 and SAPK2, is part of an ABA signaling unit that modulates seed germination and early seedling growth. The protein is bZIP transcription factor ABI5 homolog of Oryza sativa subsp. japonica (Rice).